Here is a 982-residue protein sequence, read N- to C-terminus: Glycine dehydrogenase (decarboxylating) (982 aa).

The residue at position 721 (Lys-721) is an N6-(pyridoxal phosphate)lysine.

Belongs to the GcvP family. In terms of assembly, the glycine cleavage system is composed of four proteins: P, T, L and H. Requires pyridoxal 5'-phosphate as cofactor.

The enzyme catalyses N(6)-[(R)-lipoyl]-L-lysyl-[glycine-cleavage complex H protein] + glycine + H(+) = N(6)-[(R)-S(8)-aminomethyldihydrolipoyl]-L-lysyl-[glycine-cleavage complex H protein] + CO2. The glycine cleavage system catalyzes the degradation of glycine. The P protein binds the alpha-amino group of glycine through its pyridoxal phosphate cofactor; CO(2) is released and the remaining methylamine moiety is then transferred to the lipoamide cofactor of the H protein. The sequence is that of Glycine dehydrogenase (decarboxylating) from Prochlorococcus marinus (strain MIT 9303).